The following is a 119-amino-acid chain: Beta-2-microglobulin (119 aa).

Residues 1-20 (MARFVVVALLVLLSLSGLEA) form the signal peptide. An Ig-like C1-type domain is found at 25 to 114 (PKIQVYSRHP…VTLSTPKTVK (90 aa)). A disulfide bridge links Cys45 with Cys100.

This sequence belongs to the beta-2-microglobulin family. In terms of assembly, heterodimer of an alpha chain and a beta chain. Beta-2-microglobulin is the beta-chain of major histocompatibility complex class I molecules.

The protein localises to the secreted. Its function is as follows. Component of the class I major histocompatibility complex (MHC). Involved in the presentation of peptide antigens to the immune system. This chain is Beta-2-microglobulin (B2M), found in Aotus azarae (Azara's night monkey).